The sequence spans 164 residues: Respiratory growth induced protein 2 (164 aa).

Belongs to the RGI1 family.

It localises to the cytoplasm. Involved in the control of energetic metabolism and significantly contribute to cell fitness, especially under respiratory growth conditions. The sequence is that of Respiratory growth induced protein 2 (RGI2) from Candida glabrata (strain ATCC 2001 / BCRC 20586 / JCM 3761 / NBRC 0622 / NRRL Y-65 / CBS 138) (Yeast).